A 473-amino-acid chain; its full sequence is Photosystem II CP43 reaction center protein (473 aa).

A propeptide spanning residues 1 to 14 (MKTLYSPRRFYPVE) is cleaved from the precursor. Thr15 carries the post-translational modification N-acetylthreonine. Thr15 is modified (phosphothreonine). 5 helical membrane-spanning segments follow: residues 69–93 (LFEV…PHLA), 134–155 (LIGP…KDRN), 178–200 (KALF…RKIT), 255–275 (KPFA…LSYS), and 291–312 (WFNN…ASQA). Glu367 is a binding site for [CaMn4O5] cluster. The helical transmembrane segment at 447 to 471 (RARAAAAGFEKGIDRDLEPVLFMTP) threads the bilayer.

Belongs to the PsbB/PsbC family. PsbC subfamily. PSII is composed of 1 copy each of membrane proteins PsbA, PsbB, PsbC, PsbD, PsbE, PsbF, PsbH, PsbI, PsbJ, PsbK, PsbL, PsbM, PsbT, PsbX, PsbY, PsbZ, Psb30/Ycf12, at least 3 peripheral proteins of the oxygen-evolving complex and a large number of cofactors. It forms dimeric complexes. Requires Binds multiple chlorophylls and provides some of the ligands for the Ca-4Mn-5O cluster of the oxygen-evolving complex. It may also provide a ligand for a Cl- that is required for oxygen evolution. PSII binds additional chlorophylls, carotenoids and specific lipids. as cofactor.

It is found in the plastid. The protein resides in the chloroplast thylakoid membrane. Its function is as follows. One of the components of the core complex of photosystem II (PSII). It binds chlorophyll and helps catalyze the primary light-induced photochemical processes of PSII. PSII is a light-driven water:plastoquinone oxidoreductase, using light energy to abstract electrons from H(2)O, generating O(2) and a proton gradient subsequently used for ATP formation. This Gnetum parvifolium (Small-leaved jointfir) protein is Photosystem II CP43 reaction center protein.